The sequence spans 237 residues: Glutathione S-transferase L1 (237 aa).

Residues G29–S110 form the GST N-terminal domain. Glutathione-binding positions include C39 to P40, N67 to R68, K81 to V82, and E94 to S95. The GST C-terminal domain occupies Y112 to Y232.

It belongs to the GST superfamily. Lambda family.

It is found in the cytoplasm. It localises to the cytosol. The enzyme catalyses RX + glutathione = an S-substituted glutathione + a halide anion + H(+). Catalyzes the glutathione-dependent reduction of S-glutathionylquercetin to quercetin. In vitro, possesses glutathione-dependent thiol transferase activity toward 2-hydroxyethyl disulfide (HED). This is Glutathione S-transferase L1 (GSTL1) from Arabidopsis thaliana (Mouse-ear cress).